The primary structure comprises 239 residues: Ribosomal RNA small subunit methyltransferase G (239 aa).

Residues Gly78, Phe83, 129 to 130, and Arg148 each bind S-adenosyl-L-methionine; that span reads AE.

This sequence belongs to the methyltransferase superfamily. RNA methyltransferase RsmG family.

Its subcellular location is the cytoplasm. Its function is as follows. Specifically methylates the N7 position of a guanine in 16S rRNA. The sequence is that of Ribosomal RNA small subunit methyltransferase G from Alkaliphilus metalliredigens (strain QYMF).